A 515-amino-acid polypeptide reads, in one-letter code: Maturase K (515 aa).

It belongs to the intron maturase 2 family. MatK subfamily.

It localises to the plastid. The protein localises to the chloroplast. Functionally, usually encoded in the trnK tRNA gene intron. Probably assists in splicing its own and other chloroplast group II introns. This Pinus luchuensis (Ryukyu island pine) protein is Maturase K.